Here is a 759-residue protein sequence, read N- to C-terminus: Na(+)/H(+) exchanger beta (759 aa).

Residues 1–14 (MPAFSCAFPGCRRD) lie on the Cytoplasmic side of the membrane. The chain crosses the membrane as a helical span at residues 15–34 (LLVIVLVVFVGIGLPIEASA). Topologically, residues 35–75 (PAYQSHGTEGSHLTNITNTKKAFPVLAVNYEHVRKPFEIAL) are extracellular. A glycan (N-linked (GlcNAc...) asparagine) is linked at asparagine 49. The chain crosses the membrane as a helical span at residues 76–95 (WILLALLMKLGFHLIPRLSA). The Cytoplasmic portion of the chain corresponds to 96–97 (VV). The helical transmembrane segment at 98–117 (PESCLLIVVGLLVGGLIKVI) threads the bilayer. Residues 118–122 (GEEPP) lie on the Extracellular side of the membrane. The chain crosses the membrane as a helical span at residues 123–142 (VLDSQLFFLCLLPPIILDAG). The Cytoplasmic segment spans residues 143–149 (YFLPIRP). The chain crosses the membrane as a helical span at residues 150–169 (FTENVGTILVFAVIGTLWNA). Topologically, residues 170–195 (FFMGGLLYALCQIESVGLSGVDLLAC) are extracellular. The helical transmembrane segment at 196 to 214 (LLFGSIVSAVDPVAVLAVF) threads the bilayer. The Cytoplasmic portion of the chain corresponds to 215 to 225 (EEIHINELVHI). The chain crosses the membrane as a helical span at residues 226–244 (LVFGESLLNDAVTVVLYNL). Topologically, residues 245 to 261 (FEEFSKVGTVTVLDVFL) are extracellular. A helical membrane pass occupies residues 262 to 282 (GVVCFFVVSLGGVLVGAIYGF). Topologically, residues 283-311 (LAAFTSRFTSHTRVIEPLFVFLYSYMAYL) are cytoplasmic. The helical transmembrane segment at 312–330 (SSEMFHLSGIMALIACGVV) threads the bilayer. The Extracellular segment spans residues 331–352 (MRPYVEANISHKSYTTIKYFLK). N-linked (GlcNAc...) asparagine glycosylation is present at asparagine 338. Residues 353–372 (MWSSVSETLIFIFLGVSTVA) traverse the membrane as a helical segment. Topologically, residues 373-376 (GPHA) are cytoplasmic. The helical transmembrane segment at 377–398 (WNWTFVITTVILCLVSRVLGVI) threads the bilayer. Topologically, residues 399–446 (GLTFIINKFRIVKLTKKDQFIVAYGGLRGAIAFSLGYLLSNSHQMRNL) are extracellular. The helical transmembrane segment at 447 to 467 (FLTAIITVIFFTVFVQGMTIR) threads the bilayer. Residues 468 to 759 (PLVELLAVKK…KEDDDPFMSC (292 aa)) are Cytoplasmic-facing. Phosphoserine; by PKA is present on residues serine 641 and serine 648. Residues 681-759 (FPTVHFEQPS…KEDDDPFMSC (79 aa)) are disordered. Over residues 707–719 (VPKRPSLKADIEG) the composition is skewed to basic and acidic residues.

Belongs to the monovalent cation:proton antiporter 1 (CPA1) transporter (TC 2.A.36) family. In terms of processing, activated by cAMP, protein kinase A and protein kinase C.

The protein resides in the basolateral cell membrane. Involved in pH regulation to eliminate acids generated by active metabolism or to counter adverse environmental conditions. Major proton extruding system driven by the inward sodium ion chemical gradient. This Oncorhynchus mykiss (Rainbow trout) protein is Na(+)/H(+) exchanger beta.